A 189-amino-acid polypeptide reads, in one-letter code: Holliday junction branch migration complex subunit RuvA (189 aa).

Residues 1 to 63 (MIHALNGKVE…DDGISLYGFL (63 aa)) are domain I. The tract at residues 64-135 (EVIKLKLFEK…ELKDTIKELD (72 aa)) is domain II. The segment at 135 to 139 (DVSIN) is flexible linker. The interval 140 to 189 (EKDRKVLEAIEALVTLGFNRNQAKKAVNKVAAKDDKLDDIIKKALRFLSR) is domain III.

The protein belongs to the RuvA family. Homotetramer. Forms an RuvA(8)-RuvB(12)-Holliday junction (HJ) complex. HJ DNA is sandwiched between 2 RuvA tetramers; dsDNA enters through RuvA and exits via RuvB. An RuvB hexamer assembles on each DNA strand where it exits the tetramer. Each RuvB hexamer is contacted by two RuvA subunits (via domain III) on 2 adjacent RuvB subunits; this complex drives branch migration. In the full resolvosome a probable DNA-RuvA(4)-RuvB(12)-RuvC(2) complex forms which resolves the HJ.

It is found in the cytoplasm. The RuvA-RuvB-RuvC complex processes Holliday junction (HJ) DNA during genetic recombination and DNA repair, while the RuvA-RuvB complex plays an important role in the rescue of blocked DNA replication forks via replication fork reversal (RFR). RuvA specifically binds to HJ cruciform DNA, conferring on it an open structure. The RuvB hexamer acts as an ATP-dependent pump, pulling dsDNA into and through the RuvAB complex. HJ branch migration allows RuvC to scan DNA until it finds its consensus sequence, where it cleaves and resolves the cruciform DNA. The protein is Holliday junction branch migration complex subunit RuvA of Thermosipho africanus (strain TCF52B).